Here is a 530-residue protein sequence, read N- to C-terminus: ATP synthase subunit alpha (530 aa).

ATP is bound at residue 169–176; the sequence is GDRQTGKT.

This sequence belongs to the ATPase alpha/beta chains family. As to quaternary structure, F-type ATPases have 2 components, CF(1) - the catalytic core - and CF(0) - the membrane proton channel. CF(1) has five subunits: alpha(3), beta(3), gamma(1), delta(1), epsilon(1). CF(0) has three main subunits: a(1), b(2) and c(9-12). The alpha and beta chains form an alternating ring which encloses part of the gamma chain. CF(1) is attached to CF(0) by a central stalk formed by the gamma and epsilon chains, while a peripheral stalk is formed by the delta and b chains.

The protein resides in the cell membrane. The catalysed reaction is ATP + H2O + 4 H(+)(in) = ADP + phosphate + 5 H(+)(out). Its function is as follows. Produces ATP from ADP in the presence of a proton gradient across the membrane. The alpha chain is a regulatory subunit. This Mycoplasmopsis synoviae (strain 53) (Mycoplasma synoviae) protein is ATP synthase subunit alpha.